We begin with the raw amino-acid sequence, 145 residues long: Ribosome maturation factor RimP (145 aa).

This sequence belongs to the RimP family.

It is found in the cytoplasm. Functionally, required for maturation of 30S ribosomal subunits. The protein is Ribosome maturation factor RimP of Borreliella burgdorferi (strain ATCC 35210 / DSM 4680 / CIP 102532 / B31) (Borrelia burgdorferi).